The sequence spans 535 residues: SIR4-interacting protein SIF2 (535 aa).

The LisH domain occupies 4–36; the sequence is TSEELNYLIWRYCQEMGHEVSALALQDETRVLE. The disordered stretch occupies residues 104–140; that stretch reads EGRFTLETNSESNKAGEDGASTVERETQEDDTNSIDS. A compositionally biased stretch (acidic residues) spans 130–140; it reads TQEDDTNSIDS. Position 137 is a phosphoserine (S137). WD repeat units lie at residues 155 to 186, 218 to 248, 259 to 289, 316 to 345, 357 to 387, 399 to 428, 440 to 470, and 503 to 534; these read VKLD…RLAR, KTTN…RLWN, FHRA…ILWN, GDGS…FVYQ, GHHG…RIWH, GHSQ…RLWS, VDGV…NVYD, and SQDN…SVVA.

As to quaternary structure, homotetramer. Interacts with SIR4 N-terminal domain. Interacts with a complex composed of SIN3 and RPD3. Identified in the Set3C complex with HOS2, HST1, SNT1, CPR1, HOS4/YIL112W and SET3.

The protein localises to the nucleus. Its function is as follows. Antagonizes telomeric silencing in yeast. May recruit SIR4 to non-telomeric sites or repression. The chain is SIR4-interacting protein SIF2 (SIF2) from Saccharomyces cerevisiae (strain ATCC 204508 / S288c) (Baker's yeast).